Consider the following 303-residue polypeptide: Probable cell division protein WhiA (303 aa).

A DNA-binding region (H-T-H motif) is located at residues 272 to 303 (SIQQVADALEFPITKSGVNHRLRKINKIADDL).

Belongs to the WhiA family.

Its function is as follows. Involved in cell division and chromosome segregation. The protein is Probable cell division protein WhiA of Streptococcus pyogenes serotype M3 (strain ATCC BAA-595 / MGAS315).